Consider the following 199-residue polypeptide: MVKMLVLYYSAYGYMEQMAKAAAEGAREGGAEVTLKRVPELVPEEVAKASHYKIDQEVPIATPGELADYDAIIIGTATRYGMMASQMKNFLDQTGGLWAKGALINKVGSVMVSTATQHGGAELALISTQWQMQHHGMIIVPLSYAYREQMGNDVVRGGAPYGMTTTADGDGSRQPSAQELDGARFQGRRVAEITAKLHG.

The Flavodoxin-like domain occupies Met-4–Val-190. FMN is bound by residues Ser-10–Met-15 and Thr-78–Tyr-80. NAD(+) is bound at residue Tyr-12. Position 98 (Trp-98) interacts with substrate. Residues Ser-113–Gly-119 and His-134 contribute to the FMN site. The disordered stretch occupies residues Gly-158–Asp-181. The segment covering Met-163–Ala-177 has biased composition (polar residues).

This sequence belongs to the WrbA family. The cofactor is FMN.

The enzyme catalyses a quinone + NADH + H(+) = a quinol + NAD(+). The catalysed reaction is a quinone + NADPH + H(+) = a quinol + NADP(+). This Brucella abortus (strain S19) protein is NAD(P)H dehydrogenase (quinone).